The following is a 127-amino-acid chain: Large ribosomal subunit protein bL19 (127 aa).

Belongs to the bacterial ribosomal protein bL19 family.

Its function is as follows. This protein is located at the 30S-50S ribosomal subunit interface and may play a role in the structure and function of the aminoacyl-tRNA binding site. This Acidovorax ebreus (strain TPSY) (Diaphorobacter sp. (strain TPSY)) protein is Large ribosomal subunit protein bL19.